The primary structure comprises 694 residues: Glycine--tRNA ligase beta subunit (694 aa).

Belongs to the class-II aminoacyl-tRNA synthetase family. As to quaternary structure, tetramer of two alpha and two beta subunits.

The protein localises to the cytoplasm. It carries out the reaction tRNA(Gly) + glycine + ATP = glycyl-tRNA(Gly) + AMP + diphosphate. This Acidithiobacillus ferrooxidans (strain ATCC 23270 / DSM 14882 / CIP 104768 / NCIMB 8455) (Ferrobacillus ferrooxidans (strain ATCC 23270)) protein is Glycine--tRNA ligase beta subunit.